The following is a 552-amino-acid chain: Urocanate hydratase (552 aa).

Residues 49–50, Q127, 173–175, D193, 239–240, 260–264, 270–271, and Y319 each bind NAD(+); these read GG, GMG, NA, QTSAH, and YI. Residue C407 is part of the active site. G489 is an NAD(+) binding site.

The protein belongs to the urocanase family. NAD(+) is required as a cofactor.

The protein localises to the cytoplasm. The catalysed reaction is 4-imidazolone-5-propanoate = trans-urocanate + H2O. It functions in the pathway amino-acid degradation; L-histidine degradation into L-glutamate; N-formimidoyl-L-glutamate from L-histidine: step 2/3. Its function is as follows. Catalyzes the conversion of urocanate to 4-imidazolone-5-propionate. This is Urocanate hydratase from Bacillus thuringiensis (strain Al Hakam).